The primary structure comprises 377 residues: Flagellar P-ring protein (377 aa).

Residues 1–30 (MLARFLSSLLKASVTALAVVVAFGFAANFA) form the signal peptide.

The protein belongs to the FlgI family. In terms of assembly, the basal body constitutes a major portion of the flagellar organelle and consists of four rings (L,P,S, and M) mounted on a central rod.

It localises to the periplasm. It is found in the bacterial flagellum basal body. Assembles around the rod to form the L-ring and probably protects the motor/basal body from shearing forces during rotation. This is Flagellar P-ring protein from Cupriavidus pinatubonensis (strain JMP 134 / LMG 1197) (Cupriavidus necator (strain JMP 134)).